The primary structure comprises 270 residues: Endochitinase PR4 (270 aa).

An N-terminal signal peptide occupies residues Met-1–Ala-23. The region spanning Gln-24–Thr-58 is the Chitin-binding type-1 domain. 7 disulfide bridges follow: Cys-26–Cys-34, Cys-28–Cys-40, Cys-33–Cys-47, Cys-51–Cys-56, Cys-88–Cys-137, Cys-150–Cys-160, and Cys-238–Cys-270. The Proton donor role is filled by Glu-132.

It belongs to the glycosyl hydrolase 19 family. Chitinase class I subfamily.

It carries out the reaction Random endo-hydrolysis of N-acetyl-beta-D-glucosaminide (1-&gt;4)-beta-linkages in chitin and chitodextrins.. Its function is as follows. Defense against chitin-containing fungal pathogens. In Phaseolus vulgaris (Kidney bean), this protein is Endochitinase PR4 (CHI4).